Here is a 2222-residue protein sequence, read N- to C-terminus: Protein SWEETIE (2222 aa).

10 HEAT repeats span residues 37–75 (LLCFEILSDLISAIDEEPKESLLVTQRKCEDALYSLVTL), 228–265 (SEFDTLASYCVKGIEDSESSVRDAFAEALGSLLALGMH), 331–368 (SELQDYSLPIMDMLRGDSSIDAHALACVLYILRVGVID), 510–540 (PARLPRSVLEVSKKMLTESRRNVTVASSEKE), 541–578 (AGWLLLSSLLNSMPKEEFGDQDFDILILWTDVFAGNPE), 611–648 (CNDGILLQPVLANLRSALSCVSTMANKRFSDVKTLVDI), 768–807 (QGMLSLLSVIQQCLKAGKKQQWRTASLTNICAGLLAGLKA), 898–936 (MALSSLVPATVNSVSSLTKTSVLGLKIWALHGLLLTIEA), 968–1008 (QGIG…WQEI), and 1029–1066 (VSVHIHVKNLLMTLASRQPIIRRLSVSTLRHLVEKDPV). Residues 1133 to 1165 (IAENDPAYTRENLGDDDEDMVSSSSGKSIRANP) are disordered. HEAT repeat units lie at residues 1238–1269 (MRPIGVGLLSTILEKFKLVADPELPGHLLLEQ), 1270–1306 (YQAQLLSAVRTALDANSGPVLLEAGLQLATKIMTSGI), 1312–1354 (VAVK…AHAS), 1372–1410 (VEFEALLPMFSKSSDLLGRYWIQVLKGYSYICLCQNLKK), 1434–1474 (EAWP…LEAE), 1550–1586 (DLCQELLQVLSYSFHMDSSWDILAVSVVQQISQNCPK), 1783–1820 (VMLKSCQISIAAVVKDSNVQVQATVLQVLKSLVQRYNN), 1836–1874 (GDIVSLMQRALLKPVNTESVVIAGECLRFIMLLQTHSIT), 1880–1917 (GFMSLFLEVVLVVFSKTSDGVSQEVLELRNVAVRLVSH), and 1966–2006 (AMDI…QVST). The disordered stretch occupies residues 1992-2203 (EALSTMPTSF…DESSKEHVGA (212 aa)). A compositionally biased stretch (polar residues) spans 1996 to 2009 (TMPTSFNQVSTVES). Acidic residues predominate over residues 2010–2027 (GTDEEEEEEEDDDDDDWD). Residues 2028–2040 (TFQSFPASTNLEG) show a composition bias toward polar residues. The segment covering 2062–2072 (QDDESNAEETD) has biased composition (acidic residues). Basic and acidic residues-rich tracts occupy residues 2073–2096 (DQHLASDHATDITREDSNDKSKEV) and 2108–2124 (TREDSVDKSKEVEEETV). Polar residues predominate over residues 2150-2164 (NEQSVESKNLESENI). A compositionally biased stretch (basic and acidic residues) spans 2191–2202 (SPEDESSKEHVG).

Belongs to the HEATR5 family.

Its function is as follows. May regulate multiple metabolic, hormonal and stress-related pathways. Required for carbohydrate metabolism and homoeostasis. May also monitor ethylene biosynthesis and senescence. The sequence is that of Protein SWEETIE from Arabidopsis thaliana (Mouse-ear cress).